The following is a 697-amino-acid chain: Serotransferrin (697 aa).

A signal peptide spans 1 to 19 (MRLTVGALLACAALGLCLA). 2 Transferrin-like domains span residues 25–347 (VKWC…NQQE) and 360–682 (VKWC…NMRK). 2 disulfide bridges follow: C28–C67 and C38–C58. R42 carries the dimethylated arginine modification. Fe(3+) is bound by residues D82 and Y114. 8 disulfide bridges follow: C137/C213, C156/C350, C177/C193, C180/C196, C190/C198, C246/C260, C363/C395, and C373/C386. Hydrogencarbonate contacts are provided by T139, R143, A145, and G146. Position 207 (Y207) interacts with Fe(3+). H268 is a Fe(3+) binding site. A Phosphoserine modification is found at S388. Positions 410 and 448 each coordinate Fe(3+). Cystine bridges form between C420–C692, C435–C655, C472–C543, C496–C683, C506–C520, C517–C526, C583–C597, and C633–C638. T474, R478, A480, and G481 together coordinate hydrogencarbonate. N-linked (GlcNAc...) asparagine glycosylation is present at N513. Y537 is a Fe(3+) binding site. H605 provides a ligand contact to Fe(3+). At S684 the chain carries Phosphoserine.

The protein belongs to the transferrin family. In terms of assembly, monomer. Part of a complex composed of SLC40A1/ferroportin, TF/transferrin and HEPH/hephaestin that transfers iron from cells to transferrin. As to expression, expressed by the liver and secreted in plasma.

The protein localises to the secreted. Its function is as follows. Transferrins are iron binding transport proteins which can bind two Fe(3+) ions in association with the binding of an anion, usually bicarbonate. It is responsible for the transport of iron from sites of absorption and heme degradation to those of storage and utilization. Serum transferrin may also have a further role in stimulating cell proliferation. This is Serotransferrin (Tf) from Mus musculus (Mouse).